The chain runs to 346 residues: Protein RecA (346 aa).

An ATP-binding site is contributed by 67-74 (GPESSGKT).

It belongs to the RecA family.

It is found in the cytoplasm. Can catalyze the hydrolysis of ATP in the presence of single-stranded DNA, the ATP-dependent uptake of single-stranded DNA by duplex DNA, and the ATP-dependent hybridization of homologous single-stranded DNAs. It interacts with LexA causing its activation and leading to its autocatalytic cleavage. This chain is Protein RecA, found in Mycobacterium marinum (strain ATCC BAA-535 / M).